The following is a 257-amino-acid chain: Ribonuclease HII (257 aa).

One can recognise an RNase H type-2 domain in the interval 71–257 (SLIAGIDEVG…TSFEPIKSML (187 aa)). Positions 77, 78, and 172 each coordinate a divalent metal cation.

This sequence belongs to the RNase HII family. The cofactor is Mn(2+). Requires Mg(2+) as cofactor.

The protein localises to the cytoplasm. The catalysed reaction is Endonucleolytic cleavage to 5'-phosphomonoester.. Its function is as follows. Endonuclease that specifically degrades the RNA of RNA-DNA hybrids. In Streptococcus uberis (strain ATCC BAA-854 / 0140J), this protein is Ribonuclease HII.